An 852-amino-acid chain; its full sequence is Taste receptor type 1 member 3 (852 aa).

The signal sequence occupies residues 1–20 (MLGPAVLGLSLWALLQPGAG). Topologically, residues 21–570 (APLCLSQQLR…FLAWGEPAVL (550 aa)) are extracellular. N-linked (GlcNAc...) asparagine glycans are attached at residues N85, N130, N264, N285, N380, N411, N432, and N475. Residues 571–591 (LLLLLLSLALGLVLAALGLFV) form a helical membrane-spanning segment. Topologically, residues 592-603 (HHRDSPLVQASG) are cytoplasmic. Residues 604 to 624 (GPLACFGLVCLGLVCLSVLLF) traverse the membrane as a helical segment. The Extracellular portion of the chain corresponds to 625-639 (PGQPSPAQCLAQQPL). A helical membrane pass occupies residues 640–660 (SHLPLTGCLSTLFLQAAEIFV). The Cytoplasmic segment spans residues 661–682 (ESELPLSWADRLSGCLRGPWAW). A helical membrane pass occupies residues 683 to 703 (LVVLLAMLVEVALCTWYLVAF). Residues 704–729 (PPEVVTDWHMLPTEALVHCRTRSWVS) are Extracellular-facing. The chain crosses the membrane as a helical span at residues 730–750 (FGLAHATNATLAFLCFLGTFL). The Cytoplasmic segment spans residues 751-762 (VRSQPGRYNRAR). The helical transmembrane segment at 763-783 (GLTFAMLAYFITWVSFVPLLA) threads the bilayer. Residues 784-791 (NVQVVLRP) lie on the Extracellular side of the membrane. A helical transmembrane segment spans residues 792-812 (AVQMGALLLCVLGILAAFHLP). The Cytoplasmic portion of the chain corresponds to 813–852 (RCYLLIRQPGLNTPEFFLGGGPGDAQGRNDGDTGNQGKHE). The segment at 833 to 852 (GPGDAQGRNDGDTGNQGKHE) is disordered. A compositionally biased stretch (basic and acidic residues) spans 839–852 (GRNDGDTGNQGKHE).

The protein belongs to the G-protein coupled receptor 3 family. TAS1R subfamily. Forms homodimers or heterodimers with TAS1R1 and TAS1R2.

It localises to the cell membrane. In terms of biological role, putative taste receptor. TAS1R1/TAS1R3 responds to the umami taste stimulus (the taste of monosodium glutamate). TAS1R2/TAS1R3 recognizes diverse natural and synthetic sweeteners. TAS1R3 is essential for the recognition and response to the disaccharide trehalose. Sequence differences within and between species can significantly influence the selectivity and specificity of taste responses. The protein is Taste receptor type 1 member 3 (TAS1R3) of Gorilla gorilla gorilla (Western lowland gorilla).